Reading from the N-terminus, the 1294-residue chain is ATPase PglY (1294 aa).

The interval Thr-1205–Ala-1263 is disordered. Residues Asp-1228–Pro-1244 show a composition bias toward polar residues. The span at Thr-1252–Ala-1263 shows a compositional bias: low complexity.

Its function is as follows. BREX systems (bacteriophage exclusion) provide immunity against bacteriophage. Part of a type 2 BREX system. Previously called the phage growth limitation (Pgl) system, it confers protection against bacteriophage phiC31. The bacteria allows one cycle of phage infection, but subsequent cycles are impaired, protecting the original bacterial colony. The system undergoes high rates (10(-3) to 10(-4)) of phase reversion, i.e. loss and regain of phiC31 resistance. When the pglW-pglX-pglY-pglZ genes are transformed into a susceptible S.lividans (strain 1326) they confer resistance to infection by phage phiC31 and phiBT1; all 4 genes are necessary. Functionally, hydrolyzes ATP but not AMP, ADP, GMP, GDP or GTP; activity is inhibited by the non-hydrolyzable ATP analog 5-adenylyl beta,gamma-imidodiphosphate. The protein is ATPase PglY of Streptomyces coelicolor (strain ATCC BAA-471 / A3(2) / M145).